The following is a 267-amino-acid chain: 4-hydroxy-tetrahydrodipicolinate reductase (267 aa).

Residues 12 to 17 (GPRGRM), 100 to 102 (GTT), and 126 to 129 (APNF) each bind NAD(+). The active-site Proton donor/acceptor is histidine 156. (S)-2,3,4,5-tetrahydrodipicolinate is bound at residue histidine 157. Residue lysine 160 is the Proton donor of the active site. Residue 166–167 (GT) coordinates (S)-2,3,4,5-tetrahydrodipicolinate.

It belongs to the DapB family.

The protein localises to the cytoplasm. It carries out the reaction (S)-2,3,4,5-tetrahydrodipicolinate + NAD(+) + H2O = (2S,4S)-4-hydroxy-2,3,4,5-tetrahydrodipicolinate + NADH + H(+). The enzyme catalyses (S)-2,3,4,5-tetrahydrodipicolinate + NADP(+) + H2O = (2S,4S)-4-hydroxy-2,3,4,5-tetrahydrodipicolinate + NADPH + H(+). It participates in amino-acid biosynthesis; L-lysine biosynthesis via DAP pathway; (S)-tetrahydrodipicolinate from L-aspartate: step 4/4. In terms of biological role, catalyzes the conversion of 4-hydroxy-tetrahydrodipicolinate (HTPA) to tetrahydrodipicolinate. The chain is 4-hydroxy-tetrahydrodipicolinate reductase from Bacillus velezensis (strain DSM 23117 / BGSC 10A6 / LMG 26770 / FZB42) (Bacillus amyloliquefaciens subsp. plantarum).